We begin with the raw amino-acid sequence, 199 residues long: NADH-quinone oxidoreductase subunit C (199 aa).

This sequence belongs to the complex I 30 kDa subunit family. As to quaternary structure, NDH-1 is composed of 14 different subunits. Subunits NuoB, C, D, E, F, and G constitute the peripheral sector of the complex.

It is found in the cell inner membrane. The catalysed reaction is a quinone + NADH + 5 H(+)(in) = a quinol + NAD(+) + 4 H(+)(out). Functionally, NDH-1 shuttles electrons from NADH, via FMN and iron-sulfur (Fe-S) centers, to quinones in the respiratory chain. The immediate electron acceptor for the enzyme in this species is believed to be ubiquinone. Couples the redox reaction to proton translocation (for every two electrons transferred, four hydrogen ions are translocated across the cytoplasmic membrane), and thus conserves the redox energy in a proton gradient. This Polynucleobacter necessarius subsp. necessarius (strain STIR1) protein is NADH-quinone oxidoreductase subunit C.